Reading from the N-terminus, the 31-residue chain is Cytochrome b6-f complex subunit 6 (31 aa).

The helical transmembrane segment at 4–24 (ITSYFGFLLAALTITSAIFIG) threads the bilayer.

The protein belongs to the PetL family. The 4 large subunits of the cytochrome b6-f complex are cytochrome b6, subunit IV (17 kDa polypeptide, PetD), cytochrome f and the Rieske protein, while the 4 small subunits are PetG, PetL, PetM and PetN. The complex functions as a dimer.

It is found in the plastid. It localises to the chloroplast thylakoid membrane. Its function is as follows. Component of the cytochrome b6-f complex, which mediates electron transfer between photosystem II (PSII) and photosystem I (PSI), cyclic electron flow around PSI, and state transitions. PetL is important for photoautotrophic growth as well as for electron transfer efficiency and stability of the cytochrome b6-f complex. The sequence is that of Cytochrome b6-f complex subunit 6 from Ficus carica (Common fig).